The primary structure comprises 216 residues: Phosphoenolpyruvate guanylyltransferase (216 aa).

Residues threonine 143, glycine 159, and serine 162 each coordinate phosphoenolpyruvate.

Belongs to the CofC family.

The enzyme catalyses phosphoenolpyruvate + GTP + H(+) = enolpyruvoyl-2-diphospho-5'-guanosine + diphosphate. The protein operates within cofactor biosynthesis; coenzyme F420 biosynthesis. Guanylyltransferase that catalyzes the activation of phosphoenolpyruvate (PEP) as enolpyruvoyl-2-diphospho-5'-guanosine, via the condensation of PEP with GTP. It is involved in the biosynthesis of coenzyme F420, a hydride carrier cofactor. The chain is Phosphoenolpyruvate guanylyltransferase from Streptomyces scabiei (strain 87.22).